The following is a 206-amino-acid chain: Shieldin complex subunit 1 (206 aa).

Residues 27 to 94 form a disordered region; that stretch reads SSYEASQRVS…GQLETNEEED (68 aa). Low complexity predominate over residues 32–55; the sequence is SQRVSQGSSNSLSSLESHPFLSSS. Residues 56-74 show a composition bias toward polar residues; the sequence is TTDPDSNSLNTEQKGSWDS.

In terms of assembly, component of the shieldin complex, consisting of SHLD1, SHLD2, SHLD3 and MAD2L2/REV7. Within the complex, SHLD2 forms a scaffold which interacts with a SHLD3-MAD2L2 subcomplex via its N-terminus, and with SHLD1 via its C-terminus. Interacts with ASTE1.

It is found in the chromosome. In terms of biological role, component of the shieldin complex, which plays an important role in repair of DNA double-stranded breaks (DSBs). During G1 and S phase of the cell cycle, the complex functions downstream of TP53BP1 to promote non-homologous end joining (NHEJ) and suppress DNA end resection. Mediates various NHEJ-dependent processes including immunoglobulin class-switch recombination, and fusion of unprotected telomeres. The chain is Shieldin complex subunit 1 from Mus musculus (Mouse).